The chain runs to 144 residues: Maximins 11/H1 (144 aa).

The N-terminal stretch at 1–18 (MNFKYIVAVSFLIASAYA) is a signal peptide. Positions 19-43 (RSEENDEQSLSQRDVLEEESLREIR) are excised as a propeptide. Asparagine amide is present on Asn-70. The propeptide occupies 74–123 (TAEDHEVMKRLEAVMRDLDSLDYPEEASERETRGFNQEEIANLFTKKEKR). Leu-143 is modified (leucine amide).

Belongs to the bombinin family. Expressed by the skin glands.

The protein resides in the secreted. Its function is as follows. Maximin-11 shows antimicrobial activity against bacteria and against the fungus C.albicans. It has little hemolytic activity. Maximin-H1 shows antibacterial activity against both Gram-positive and Gram-negative bacteria. It also shows antimicrobial activity against the fungus C.albicans. Shows strong hemolytic activity. In Bombina maxima (Giant fire-bellied toad), this protein is Maximins 11/H1.